The sequence spans 504 residues: Amphoterin-induced protein 3 (504 aa).

A signal peptide spans 1–19 (MTWLVLLGTLLCMLRVGLG). The Extracellular segment spans residues 20-383 (TPDSEGFPPR…PRPEPEAFNT (364 aa)). The LRRNT domain maps to 25–61 (GFPPRALHNCPYKCICAADLLSCTGLGLQDVPAELPA). Intrachain disulfides connect Cys-34/Cys-40 and Cys-38/Cys-47. 6 LRR repeats span residues 62–83 (ATADLDLSHNALQRLRPGWLAP), 86–107 (QLRALHLDHNELDALGRGVFVN), 110–133 (GLRLLDLSSNTLRALGRHDLDGLG), 134–155 (ALEKLLLFNNRLVHLDEHAFHG), 158–178 (ALSHLYLGCNELASFSFDHLH), and 184–207 (HLLTLDLSSNRLGHISVPELAALP). A glycan (N-linked (GlcNAc...) asparagine) is linked at Asn-107. The LRRCT domain occupies 219–275 (NPLPCDCRLYHLLQRWHQRGLSAVRDFAREYVCLAFKVPASRVRFFQHSRVFENCSS). 3 cysteine pairs are disulfide-bonded: Cys-223/Cys-251, Cys-225/Cys-273, and Cys-300/Cys-352. 4 N-linked (GlcNAc...) asparagine glycosylation sites follow: Asn-272, Asn-301, Asn-362, and Asn-368. The 94-residue stretch at 277-370 (PALGLERPEE…HNQTHEYNVS (94 aa)) folds into the Ig-like C2-type domain. A helical transmembrane segment spans residues 384 to 404 (GFTTLLGCAVGLVLVLLYLFA). Topologically, residues 405–504 (PPCRCCRRAC…SIGSEGPMTT (100 aa)) are cytoplasmic. A disordered region spans residues 422 to 448 (TPSPLQELSAQSSVLSTTPPDAPSRKA). Polar residues predominate over residues 424–440 (SPLQELSAQSSVLSTTP).

This sequence belongs to the immunoglobulin superfamily. AMIGO family. Binds AMIGO1 or AMIGO2.

Its subcellular location is the membrane. Functionally, may mediate heterophilic cell-cell interaction. May contribute to signal transduction through its intracellular domain. The chain is Amphoterin-induced protein 3 from Homo sapiens (Human).